The following is a 441-amino-acid chain: Xaa-Pro dipeptidase (441 aa).

Mn(2+)-binding residues include Asp-244, Asp-255, His-336, Glu-381, and Glu-420.

Belongs to the peptidase M24B family. Bacterial-type prolidase subfamily. Mn(2+) serves as cofactor.

The enzyme catalyses Xaa-L-Pro dipeptide + H2O = an L-alpha-amino acid + L-proline. Functionally, splits dipeptides with a prolyl residue in the C-terminal position. The polypeptide is Xaa-Pro dipeptidase (Xanthomonas oryzae pv. oryzae (strain MAFF 311018)).